A 619-amino-acid chain; its full sequence is (-)-camphene synthase, chloroplastic (619 aa).

The N-terminal 47 residues, 1–47, are a transit peptide targeting the chloroplast; sequence MALVSVAPLVSMRRSLFSSPYELKSIDKTIPNLVMCRKRMSGTPSIR. Mg(2+) is bound by residues Asp-370, Asp-374, and Asp-522. The short motif at 370–374 is the DDXXD motif element; sequence DDIYD.

This sequence belongs to the terpene synthase family. Tpsd subfamily. Mg(2+) is required as a cofactor. Requires Mn(2+) as cofactor.

It is found in the plastid. The protein resides in the chloroplast. It catalyses the reaction (2E)-geranyl diphosphate = (1S,4R)-camphene + diphosphate. The catalysed reaction is (2E)-geranyl diphosphate = (1R,5R)-alpha-pinene + diphosphate. The enzyme catalyses (2E)-geranyl diphosphate = tricyclene + diphosphate. It carries out the reaction (2E)-geranyl diphosphate = beta-myrcene + diphosphate. It catalyses the reaction (2E)-geranyl diphosphate = (1S,5S)-beta-pinene + diphosphate. The catalysed reaction is (2E)-geranyl diphosphate = (1S,5S)-alpha-pinene + diphosphate. It functions in the pathway terpene metabolism; oleoresin biosynthesis. It participates in secondary metabolite biosynthesis; terpenoid biosynthesis. In terms of biological role, monoterpene synthase (TPS) involved in the biosynthesis of monoterpene natural products included in conifer oleoresin secretions and volatile emissions; these compounds contribute to biotic and abiotic stress defense against herbivores and pathogens. Catalyzes the conversion of (2E)-geranyl diphosphate (GPP) to (-)-camphene, (+)-alpha-pinene and (-)-alpha-pinene, and, to a lower extent, to tricyclene, myrcene and (-)-beta-pinene. The polypeptide is (-)-camphene synthase, chloroplastic (Pinus contorta (Shore pine)).